The primary structure comprises 93 residues: Large ribosomal subunit protein uL23cz/uL23cy (93 aa).

The protein belongs to the universal ribosomal protein uL23 family. In terms of assembly, part of the 50S ribosomal subunit.

The protein resides in the plastid. It localises to the chloroplast. Its function is as follows. Binds to 23S rRNA. The polypeptide is Large ribosomal subunit protein uL23cz/uL23cy (rpl23-A) (Piper cenocladum (Ant piper)).